The chain runs to 488 residues: Malonate-semialdehyde dehydrogenase (488 aa).

NAD(+) is bound by residues alanine 150, phenylalanine 152, lysine 176, glutamate 179, arginine 180, serine 229, and threonine 251. Catalysis depends on cysteine 284, which acts as the Nucleophile. Glutamate 382 is an NAD(+) binding site.

It belongs to the aldehyde dehydrogenase family. IolA subfamily. Homotetramer.

The catalysed reaction is 3-oxopropanoate + NAD(+) + CoA + H2O = hydrogencarbonate + acetyl-CoA + NADH + H(+). The enzyme catalyses 2-methyl-3-oxopropanoate + NAD(+) + CoA + H2O = propanoyl-CoA + hydrogencarbonate + NADH + H(+). Its pathway is polyol metabolism; myo-inositol degradation into acetyl-CoA; acetyl-CoA from myo-inositol: step 7/7. Functionally, catalyzes the oxidation of malonate semialdehyde (MSA) and methylmalonate semialdehyde (MMSA) into acetyl-CoA and propanoyl-CoA, respectively. Is involved in a myo-inositol catabolic pathway. Bicarbonate, and not CO2, is the end-product of the enzymatic reaction. The chain is Malonate-semialdehyde dehydrogenase from Listeria monocytogenes serotype 4a (strain HCC23).